Here is a 244-residue protein sequence, read N- to C-terminus: Phosphoadenosine 5'-phosphosulfate reductase (244 aa).

Cysteine 239 (nucleophile; cysteine thiosulfonate intermediate) is an active-site residue.

It belongs to the PAPS reductase family. CysH subfamily.

The protein resides in the cytoplasm. It catalyses the reaction [thioredoxin]-disulfide + sulfite + adenosine 3',5'-bisphosphate + 2 H(+) = [thioredoxin]-dithiol + 3'-phosphoadenylyl sulfate. It participates in sulfur metabolism; hydrogen sulfide biosynthesis; sulfite from sulfate: step 3/3. Catalyzes the formation of sulfite from phosphoadenosine 5'-phosphosulfate (PAPS) using thioredoxin as an electron donor. This chain is Phosphoadenosine 5'-phosphosulfate reductase, found in Salmonella schwarzengrund (strain CVM19633).